The sequence spans 520 residues: Maturase K (520 aa).

It belongs to the intron maturase 2 family. MatK subfamily.

It is found in the plastid. Its subcellular location is the chloroplast. Its function is as follows. Usually encoded in the trnK tRNA gene intron. Probably assists in splicing its own and other chloroplast group II introns. The polypeptide is Maturase K (Galanthus elwesii (Giant snowdrop)).